The primary structure comprises 178 residues: Zinc finger CCHC domain-containing protein 10 (178 aa).

The CCHC-type zinc finger occupies 21-38; the sequence is VRCQKCLEFGHWTYECKG. Residues 66 to 178 form a disordered region; the sequence is QSIGETNIEK…EPQKKKKKKK (113 aa). Composition is skewed to low complexity over residues 85-113 and 121-164; these read SVTS…SSSS and SLSS…SSES.

In Mus musculus (Mouse), this protein is Zinc finger CCHC domain-containing protein 10 (Zcchc10).